The sequence spans 349 residues: 5-deoxyribose 1-phosphate isomerase (349 aa).

Residues arginine 49 to alanine 51, arginine 92, and glutamine 199 each bind substrate. Residue aspartate 240 is the Proton donor of the active site. Asparagine 250–lysine 251 lines the substrate pocket.

Belongs to the EIF-2B alpha/beta/delta subunits family. DrdI subfamily.

The enzyme catalyses 5-deoxy-alpha-D-ribose 1-phosphate = 5-deoxy-D-ribulose 1-phosphate. The protein operates within carbohydrate degradation. Catalyzes the isomerization of 5-deoxy-alpha-D-ribose 1-phosphate to 5-deoxy-D-ribulose 1-phosphate, as part of a 5-deoxyribose salvage pathway that recycles this toxic radical SAM enzyme by-product to mainstream metabolites. This is 5-deoxyribose 1-phosphate isomerase from Clostridium botulinum (strain Loch Maree / Type A3).